Here is a 340-residue protein sequence, read N- to C-terminus: Probable glucan endo-1,3-beta-glucosidase BG1 (340 aa).

A signal peptide spans 1–25 (MDLRFLASLTLLLGLFFVNTNPTGG). Residue E120 is the Proton donor of the active site. E262 acts as the Nucleophile in catalysis.

It belongs to the glycosyl hydrolase 17 family.

It localises to the secreted. It catalyses the reaction Hydrolysis of (1-&gt;3)-beta-D-glucosidic linkages in (1-&gt;3)-beta-D-glucans.. Functionally, may play a role in plant defense against pathogens. The sequence is that of Probable glucan endo-1,3-beta-glucosidase BG1 from Arabidopsis thaliana (Mouse-ear cress).